Consider the following 462-residue polypeptide: ATP synthase subunit beta (462 aa).

150 to 157 (GGAGVGKT) provides a ligand contact to ATP.

The protein belongs to the ATPase alpha/beta chains family. As to quaternary structure, F-type ATPases have 2 components, CF(1) - the catalytic core - and CF(0) - the membrane proton channel. CF(1) has five subunits: alpha(3), beta(3), gamma(1), delta(1), epsilon(1). CF(0) has three main subunits: a(1), b(2) and c(9-12). The alpha and beta chains form an alternating ring which encloses part of the gamma chain. CF(1) is attached to CF(0) by a central stalk formed by the gamma and epsilon chains, while a peripheral stalk is formed by the delta and b chains. In this bacterium the a and b subunits are transcribed but do not seem to be translated, thus the ATP synthase consists of the alpha, beta, gamma, delta, epsilon and c subunits.

The protein localises to the cell membrane. It catalyses the reaction ATP + H2O + 4 H(+)(in) = ADP + phosphate + 5 H(+)(out). In terms of biological role, produces ATP from ADP in the presence of a proton gradient across the membrane. The catalytic sites are hosted primarily by the beta subunits. In Moorella thermoacetica (strain ATCC 39073 / JCM 9320), this protein is ATP synthase subunit beta.